A 65-amino-acid chain; its full sequence is Large ribosomal subunit protein bL35 (65 aa).

The span at 1–11 (MPKIKTRRSAA) shows a compositional bias: basic residues. Residues 1–25 (MPKIKTRRSAAKRFSVTGSGKFRRR) form a disordered region.

The protein belongs to the bacterial ribosomal protein bL35 family.

The chain is Large ribosomal subunit protein bL35 from Nitratidesulfovibrio vulgaris (strain ATCC 29579 / DSM 644 / CCUG 34227 / NCIMB 8303 / VKM B-1760 / Hildenborough) (Desulfovibrio vulgaris).